Consider the following 442-residue polypeptide: tRNA-2-methylthio-N(6)-dimethylallyladenosine synthase (442 aa).

An MTTase N-terminal domain is found at 3–118; sequence KKVFIKTFGC…LPELLNARAA (116 aa). Residues Cys12, Cys49, Cys81, Cys155, Cys159, and Cys162 each coordinate [4Fe-4S] cluster. The region spanning 141–374 is the Radical SAM core domain; sequence RVEGSSAFVS…QAVINNNIKD (234 aa). Positions 377-440 constitute a TRAM domain; that stretch reads DERVGTVQRL…TFTLRGEVVV (64 aa).

It belongs to the methylthiotransferase family. MiaB subfamily. Monomer. Requires [4Fe-4S] cluster as cofactor.

The protein resides in the cytoplasm. The catalysed reaction is N(6)-dimethylallyladenosine(37) in tRNA + (sulfur carrier)-SH + AH2 + 2 S-adenosyl-L-methionine = 2-methylsulfanyl-N(6)-dimethylallyladenosine(37) in tRNA + (sulfur carrier)-H + 5'-deoxyadenosine + L-methionine + A + S-adenosyl-L-homocysteine + 2 H(+). Functionally, catalyzes the methylthiolation of N6-(dimethylallyl)adenosine (i(6)A), leading to the formation of 2-methylthio-N6-(dimethylallyl)adenosine (ms(2)i(6)A) at position 37 in tRNAs that read codons beginning with uridine. This is tRNA-2-methylthio-N(6)-dimethylallyladenosine synthase from Delftia acidovorans (strain DSM 14801 / SPH-1).